The following is a 670-amino-acid chain: FAD-binding monooxygenase ausC (670 aa).

FAD-binding positions include 144 to 147 (TWYW), 156 to 157 (DT), and Y162. NADP(+) is bound at residue 154 to 156 (MCD). NADP(+) is bound by residues 299 to 305 (TGASAVQ) and 322 to 323 (RT).

It belongs to the FAD-binding monooxygenase family. Requires FAD as cofactor.

The catalysed reaction is preaustinoid A + AH2 + O2 = preaustinoid A1 + A + H2O. It participates in secondary metabolite biosynthesis; terpenoid biosynthesis. FAD-binding monooxygenase; part of the gene cluster that mediates the biosynthesis of calidodehydroaustin, a fungal meroterpenoid. The first step of the pathway is the synthesis of 3,5-dimethylorsellinic acid by the polyketide synthase ausA. 3,5-dimethylorsellinic acid is then prenylated by the polyprenyl transferase ausN. Further epoxidation by the FAD-dependent monooxygenase ausM and cyclization by the probable terpene cyclase ausL lead to the formation of protoaustinoid A. Protoaustinoid A is then oxidized to spiro-lactone preaustinoid A3 by the combined action of the FAD-binding monooxygenases ausB and ausC, and the dioxygenase ausE. Acid-catalyzed keto-rearrangement and ring contraction of the tetraketide portion of preaustinoid A3 by ausJ lead to the formation of preaustinoid A4. The aldo-keto reductase ausK, with the help of ausH, is involved in the next step by transforming preaustinoid A4 into isoaustinone which is in turn hydroxylated by the P450 monooxygenase ausI to form austinolide. The cytochrome P450 monooxygenase ausG modifies austinolide to austinol. Austinol is further acetylated to austin by the O-acetyltransferase ausP, which spontaneously changes to dehydroaustin. The cytochrome P450 monooxygenase ausR then converts dehydroaustin is into 7-dehydrodehydroaustin. The hydroxylation catalyzed by ausR permits the O-acetyltransferase ausQ to add an additional acetyl group to the molecule, leading to the formation of acetoxydehydroaustin. The short chain dehydrogenase ausT catalyzes the reduction of the double bond present between carbon atoms 1 and 2 to convert 7-dehydrodehydroaustin into 1,2-dihydro-7-hydroxydehydroaustin. AusQ catalyzes not only an acetylation reaction but also the addition of the PKS ausV diketide product to 1,2-dihydro-7-hydroxydehydroaustin, forming precalidodehydroaustin. Finally, the iron/alpha-ketoglutarate-dependent dioxygenase converts precalidodehydroaustin into calidodehydroaustin. The protein is FAD-binding monooxygenase ausC of Aspergillus calidoustus.